A 172-amino-acid chain; its full sequence is Adenine phosphoribosyltransferase (172 aa).

This sequence belongs to the purine/pyrimidine phosphoribosyltransferase family. As to quaternary structure, homodimer.

It is found in the cytoplasm. It carries out the reaction AMP + diphosphate = 5-phospho-alpha-D-ribose 1-diphosphate + adenine. The protein operates within purine metabolism; AMP biosynthesis via salvage pathway; AMP from adenine: step 1/1. Catalyzes a salvage reaction resulting in the formation of AMP, that is energically less costly than de novo synthesis. The polypeptide is Adenine phosphoribosyltransferase (Ligilactobacillus salivarius (strain UCC118) (Lactobacillus salivarius)).